The chain runs to 103 residues: Salivary thrombin inhibitor anophelin (103 aa).

An N-terminal signal peptide occupies residues 1 to 21 (MASKLFVLAFLCLALVVVVQS). The segment at 24–103 (QYARGDVPTY…PAASSSESDE (80 aa)) is disordered. Residues 56–68 (EEFDPSLLEEHAD) form a blocks exosite I of host thrombin region. The tract at residues 74–77 (DPGR) is blocks active site cleft of host thrombin in a reverse direction compared to substrates. The segment covering 91–103 (ASAPAASSSESDE) has biased composition (low complexity).

This sequence belongs to the anophelin family. Interacts with human F2 (thrombin); the interaction results in thrombin inhibition. As to expression, female salivary gland (at protein level). Not detected in female midgut, head, carcass and male tissues (at protein level).

The protein localises to the secreted. Increasing concentration of NaCl decreases affinity for thrombin. Its function is as follows. Salivary protein with anticoagulant activity that inhibits host thrombin (F2); binds to the proteinase in a reverse orientation (opposite to substrates). This Anopheles gambiae (African malaria mosquito) protein is Salivary thrombin inhibitor anophelin.